A 1398-amino-acid chain; its full sequence is MAP-homologous protein 1 (1398 aa).

The residue at position 1 (Met1) is an N-acetylmethionine. A disordered region spans residues 21 to 77; sequence GWLVRPSASTSKSSRPGKSESKANSVAPDIQMDTARPPVFETSVDSSSSILSSNDKG. A compositionally biased stretch (polar residues) spans 27 to 36; the sequence is SASTSKSSRP. Low complexity predominate over residues 63–73; sequence SVDSSSSILSS. Phosphoserine is present on Ser81. Disordered regions lie at residues 90 to 144, 156 to 186, and 191 to 210; these read NQRA…APAP, HRKK…GAAI, and TATI…PPSY. Polar residues-rich tracts occupy residues 91-102 and 114-123; these read QRANAGSTSVPT and VVETNLSNVE. Residues 159–186 show a composition bias toward basic and acidic residues; sequence KDQEQQEKERERKERSPSPTHVDRGAAI. Residue Lys221 forms a Glycyl lysine isopeptide (Lys-Gly) (interchain with G-Cter in ubiquitin) linkage. Residue Thr222 is modified to Phosphothreonine. Disordered regions lie at residues 244-270, 296-382, 395-428, and 515-548; these read HSPE…PDPR, SSAS…PSSH, GNNN…SSME, and NPEE…NNSQ. A phosphoserine mark is found at Ser309, Ser311, Ser354, and Ser357. A compositionally biased stretch (low complexity) spans 357–371; sequence SIVDTVDSNSDVSSS. The segment covering 372-381 has biased composition (polar residues); sequence AQNNNQTPSS. Positions 396–426 are enriched in low complexity; that stretch reads NNNNNSTNASSLSANVNNPDTSSTSLWSSSS. The segment covering 521–538 has biased composition (basic and acidic residues); that stretch reads ANAKSKEEMAPQKQNEVE. Position 577 is a phosphothreonine (Thr577). A compositionally biased stretch (low complexity) spans 605-615; sequence STSSLASMVSS. Disordered regions lie at residues 605–630, 1148–1169, and 1203–1223; these read STSS…EILP, LKSP…PNSE, and DAED…HEDV. The segment covering 1160 to 1169 has biased composition (polar residues); sequence GGNQAQPNSE. Residues 1208–1223 are compositionally biased toward basic and acidic residues; that stretch reads VEFREGDDSNVNHEDV. Residues 1227-1258 are tau/MAP repeat-like; it reads DQQFRDEVDIKNKYSIIKRELEHEKLVGGGDL. Residues 1313–1372 are disordered; it reads QEETAFRTKDEQQSSQSNDSSANASPTTDPISTGSNTSRTNDNAHIPPTDAPGFDKFMNN. Low complexity predominate over residues 1325–1337; sequence QSSQSNDSSANAS. The span at 1338–1355 shows a compositional bias: polar residues; sequence PTTDPISTGSNTSRTNDN.

It is found in the cytoplasm. Its subcellular location is the cytoskeleton. The protein resides in the spindle. Essential for the formation and/or stabilization of microtubules. Binds to microtubules in vitro. The sequence is that of MAP-homologous protein 1 (MHP1) from Saccharomyces cerevisiae (strain ATCC 204508 / S288c) (Baker's yeast).